The following is a 258-amino-acid chain: Tetraspanin-18B (258 aa).

The Cytoplasmic segment spans residues 1–25 (MGLGEASARGTSMEGDCLSCIKYLM). The helical transmembrane segment at 26 to 46 (FVFNFLIFLGGSFLLGVGVWV) threads the bilayer. The Extracellular segment spans residues 47–61 (VVDPTGFREIVAANP). A helical membrane pass occupies residues 62-82 (LLFTGVYIILAMGGMLFLLGF). The Cytoplasmic segment spans residues 83-94 (LGCCGAIRENKC). The helical transmembrane segment at 95 to 115 (LLLFFFMLILIIFLAELAAAI) threads the bilayer. The Extracellular segment spans residues 116–228 (LAFIFREHLT…SAVVDYFEMY (113 aa)). A glycan (N-linked (GlcNAc...) asparagine) is linked at Asn-141. A helical membrane pass occupies residues 229 to 249 (IYVAGALAIVVLTIELFAMVF). The Cytoplasmic segment spans residues 250 to 258 (AMCLFRGIQ).

The protein belongs to the tetraspanin (TM4SF) family.

Its subcellular location is the membrane. In terms of biological role, may regulate angiogenesis through KDR/VEGFR2 and NOTCH1 pathways. The polypeptide is Tetraspanin-18B (tspan18b) (Danio rerio (Zebrafish)).